Here is a 355-residue protein sequence, read N- to C-terminus: MIPSVLLVTLLLLSWTSAEKDLKVRVARSTNDETNLHWVKCGGSVPDGAVSIQNTYVSPARTEYVCKSNCEAGYYSTKDSKCHYPFGRVEQTTSVCEILVNRDNFELLEWKEGYAGSLPANAVSTCKTNRIYVGKGAYGLGKIEPAHHCLYYGWNGAETWTKTYQALTVNKDVIEQTMKDVKYQTEGVTVIQGKPEVMRKSTVNNKQCKEVTKTVTLSKDISTEERWDVTNSVTFGVTTTVTAGIPDVASASLAVSMEARRDFAHGASKTESQSYMVTVSVPVPPKQSCTVSMVAQVNKADVPFTATLIRTYRGGKKTQTTTKGVYRTTQVAETHADVEQCTIIGDEKDCPKASK.

Residues 1 to 18 form the signal peptide; sequence MIPSVLLVTLLLLSWTSA. Positions 19–27 are excised as a propeptide; it reads EKDLKVRVA.

This sequence belongs to the natterin family. In terms of processing, contains 4 disulfide bonds. As to expression, expressed by the venom gland.

The protein resides in the secreted. Its activity is regulated as follows. Inhibited by tissue-kallikrein inhibitor TKI and trasylol. Plasma kallikrein inhibitor PKSI527 and classical inhibitors of serine-, metallo-, thiol- or aspartate-peptidases evokes a minor inhibition of the peptide digestion. In terms of biological role, shows nociceptive, edema-inducing and kininogenase activity with release of kallidin from low molecular weight kininogen. The cleavage occurs at Met-Lys bonds. This is Natterin-1 from Thalassophryne nattereri (Copper Joe toadfish).